The following is a 205-amino-acid chain: Auxin-responsive protein IAA8 (205 aa).

A disordered region spans residues 1–48 (MECMASTEESLPASSSMDSCSGELPTTTTTAPAQSTASSGCRPPATAA). Residues 7 to 19 (TEESLPASSSMDS) are compositionally biased toward polar residues. A compositionally biased stretch (low complexity) spans 25–39 (PTTTTTAPAQSTASS). The EAR-like (transcriptional repression) signature appears at 58–62 (LRLGL). The interval 71–98 (DGNNPSTPRSSLTTATVTADRGGGGGGH) is disordered. The span at 73–87 (NNPSTPRSSLTTATV) shows a compositional bias: polar residues. The PB1 domain occupies 103–199 (SLFVKVYMEG…KRLRIARADD (97 aa)).

Belongs to the Aux/IAA family. In terms of assembly, homodimers and heterodimers. Highly expressed in green shoots. Expressed in flowers.

Its subcellular location is the nucleus. Its function is as follows. Aux/IAA proteins are short-lived transcriptional factors that function as repressors of early auxin response genes at low auxin concentrations. The chain is Auxin-responsive protein IAA8 (IAA8) from Oryza sativa subsp. japonica (Rice).